Reading from the N-terminus, the 104-residue chain is Urease subunit beta (104 aa).

It belongs to the urease beta subunit family. Heterotrimer of UreA (gamma), UreB (beta) and UreC (alpha) subunits. Three heterotrimers associate to form the active enzyme.

Its subcellular location is the cytoplasm. It catalyses the reaction urea + 2 H2O + H(+) = hydrogencarbonate + 2 NH4(+). It functions in the pathway nitrogen metabolism; urea degradation; CO(2) and NH(3) from urea (urease route): step 1/1. The protein is Urease subunit beta of Rhodococcus opacus (strain B4).